Consider the following 361-residue polypeptide: 3-dehydroquinate synthase (361 aa).

NAD(+) contacts are provided by residues 104 to 108 (GVIGD), 128 to 129 (TT), K140, and K149. Zn(2+) contacts are provided by E182, H245, and H262.

Belongs to the sugar phosphate cyclases superfamily. Dehydroquinate synthase family. It depends on NAD(+) as a cofactor. Co(2+) is required as a cofactor. The cofactor is Zn(2+).

It is found in the cytoplasm. It carries out the reaction 7-phospho-2-dehydro-3-deoxy-D-arabino-heptonate = 3-dehydroquinate + phosphate. It participates in metabolic intermediate biosynthesis; chorismate biosynthesis; chorismate from D-erythrose 4-phosphate and phosphoenolpyruvate: step 2/7. In terms of biological role, catalyzes the conversion of 3-deoxy-D-arabino-heptulosonate 7-phosphate (DAHP) to dehydroquinate (DHQ). This is 3-dehydroquinate synthase from Halalkalibacterium halodurans (strain ATCC BAA-125 / DSM 18197 / FERM 7344 / JCM 9153 / C-125) (Bacillus halodurans).